A 155-amino-acid polypeptide reads, in one-letter code: Probable methanogenesis regulatory protein FilR2 (155 aa).

Residues 18–142 form the Response regulatory domain; that stretch reads IILLVEDNNA…DLKRTVEEIK (125 aa). Residue Asp75 is modified to 4-aspartylphosphate.

Post-translationally, phosphorylated by FilI.

Functionally, member of the two-component regulatory system FilI/FilRs, which is involved in the regulation of methanogenesis. The polypeptide is Probable methanogenesis regulatory protein FilR2 (Methanothrix harundinacea (strain 6Ac) (Methanosaeta harundinacea)).